The primary structure comprises 61 residues: Small ribosomal subunit protein uS14B (61 aa).

The Zn(2+) site is built by cysteine 24, cysteine 27, cysteine 40, and cysteine 43.

The protein belongs to the universal ribosomal protein uS14 family. Zinc-binding uS14 subfamily. In terms of assembly, part of the 30S ribosomal subunit. Contacts proteins S3 and S10. Zn(2+) serves as cofactor.

In terms of biological role, binds 16S rRNA, required for the assembly of 30S particles and may also be responsible for determining the conformation of the 16S rRNA at the A site. The sequence is that of Small ribosomal subunit protein uS14B from Mycolicibacterium gilvum (strain PYR-GCK) (Mycobacterium gilvum (strain PYR-GCK)).